The primary structure comprises 379 residues: Cobalt-precorrin-5B C(1)-methyltransferase (379 aa).

The protein belongs to the CbiD family.

It carries out the reaction Co-precorrin-5B + S-adenosyl-L-methionine = Co-precorrin-6A + S-adenosyl-L-homocysteine. Its pathway is cofactor biosynthesis; adenosylcobalamin biosynthesis; cob(II)yrinate a,c-diamide from sirohydrochlorin (anaerobic route): step 6/10. In terms of biological role, catalyzes the methylation of C-1 in cobalt-precorrin-5B to form cobalt-precorrin-6A. In Salmonella arizonae (strain ATCC BAA-731 / CDC346-86 / RSK2980), this protein is Cobalt-precorrin-5B C(1)-methyltransferase.